Reading from the N-terminus, the 129-residue chain is uncharacterized protein (129 aa).

The disordered stretch occupies residues Lys-23–Lys-101. Basic and acidic residues-rich tracts occupy residues Cys-31–Thr-40 and Glu-67–Pro-80.

This is an uncharacterized protein from Ictaluridae (bullhead catfishes).